A 410-amino-acid polypeptide reads, in one-letter code: Multifunctional CCA protein (410 aa).

The ATP site is built by Gly8 and Arg11. Residues Gly8 and Arg11 each coordinate CTP. Mg(2+)-binding residues include Glu21 and Asp23. ATP-binding residues include Arg91, Arg137, and Arg140. Residues Arg91, Arg137, and Arg140 each coordinate CTP. An HD domain is found at 228–329; it reads TGIHSLMALR…VKLLEQVDAF (102 aa).

This sequence belongs to the tRNA nucleotidyltransferase/poly(A) polymerase family. Bacterial CCA-adding enzyme type 1 subfamily. In terms of assembly, monomer. Can also form homodimers and oligomers. The cofactor is Mg(2+). Requires Ni(2+) as cofactor.

It carries out the reaction a tRNA precursor + 2 CTP + ATP = a tRNA with a 3' CCA end + 3 diphosphate. The catalysed reaction is a tRNA with a 3' CCA end + 2 CTP + ATP = a tRNA with a 3' CCACCA end + 3 diphosphate. Functionally, catalyzes the addition and repair of the essential 3'-terminal CCA sequence in tRNAs without using a nucleic acid template. Adds these three nucleotides in the order of C, C, and A to the tRNA nucleotide-73, using CTP and ATP as substrates and producing inorganic pyrophosphate. tRNA 3'-terminal CCA addition is required both for tRNA processing and repair. Also involved in tRNA surveillance by mediating tandem CCA addition to generate a CCACCA at the 3' terminus of unstable tRNAs. While stable tRNAs receive only 3'-terminal CCA, unstable tRNAs are marked with CCACCA and rapidly degraded. The polypeptide is Multifunctional CCA protein (Legionella pneumophila (strain Paris)).